The primary structure comprises 333 residues: DNA-directed RNA polymerase subunit alpha (333 aa).

The segment at methionine 1 to lysine 234 is alpha N-terminal domain (alpha-NTD). Residues isoleucine 248–alanine 333 are alpha C-terminal domain (alpha-CTD).

This sequence belongs to the RNA polymerase alpha chain family. In terms of assembly, homodimer. The RNAP catalytic core consists of 2 alpha, 1 beta, 1 beta' and 1 omega subunit. When a sigma factor is associated with the core the holoenzyme is formed, which can initiate transcription.

It catalyses the reaction RNA(n) + a ribonucleoside 5'-triphosphate = RNA(n+1) + diphosphate. DNA-dependent RNA polymerase catalyzes the transcription of DNA into RNA using the four ribonucleoside triphosphates as substrates. This is DNA-directed RNA polymerase subunit alpha from Pseudomonas putida (Arthrobacter siderocapsulatus).